We begin with the raw amino-acid sequence, 1067 residues long: Lon protease homolog, mitochondrial (1067 aa).

Residues 1-36 (MITRLSGACLRRSGAKRNWPREHLVHRSLLASFSTT) constitute a mitochondrion transit peptide. The span at 55-82 (KSKEPKDNKPLDNKNDPKKTHNEDESHT) shows a compositional bias: basic and acidic residues. Disordered stretches follow at residues 55–142 (KSKE…MPLN) and 262–314 (IPPK…ESTP). Positions 128 to 139 (FELGGEENEDEM) are enriched in acidic residues. One can recognise a Lon N-terminal domain in the interval 162–425 (LLALPIARRP…KALYVLKKEL (264 aa)). Basic and acidic residues predominate over residues 293–311 (VKSDLKQDNGKEEPEKEVE). 578–585 (GPPGVGKT) contacts ATP. The tract at residues 791 to 820 (NSKEKSTGKSGKKTSPQSSEDAANKEASSV) is disordered. Residues 854-1040 (TTPPGVVMGL…DDVFKRVFSN (187 aa)) enclose the Lon proteolytic domain. Active-site residues include serine 946 and lysine 989.

This sequence belongs to the peptidase S16 family. As to quaternary structure, homohexamer or homoheptamer. Organized in a ring with a central cavity.

The protein resides in the mitochondrion matrix. It carries out the reaction Hydrolysis of proteins in presence of ATP.. Functionally, ATP-dependent serine protease that mediates the selective degradation of misfolded, unassembled or oxidatively damaged polypeptides as well as certain short-lived regulatory proteins in the mitochondrial matrix. May also have a chaperone function in the assembly of inner membrane protein complexes. Participates in the regulation of mitochondrial gene expression and in the maintenance of the integrity of the mitochondrial genome. Binds to mitochondrial DNA in a site-specific manner. The sequence is that of Lon protease homolog, mitochondrial (pim1) from Schizosaccharomyces pombe (strain 972 / ATCC 24843) (Fission yeast).